The chain runs to 463 residues: Movement protein TGB1 (463 aa).

A disordered region spans residues 1–126 (MESGFNGSRP…RIPEEGGGGL (126 aa)). Nucleolar localization signal stretches follow at residues 11–16 (HRVKKD) and 37–52 (FRKNNNNKTQNWKPRS). Over residues 23-49 (PVNTQGSSGTTGNAFRKNNNNKTQNWK) the composition is skewed to polar residues. Over residues 58–67 (NEGDQTKNNK) the composition is skewed to basic and acidic residues. Residues 83–95 (RPESSTGESVKQQ) are compositionally biased toward polar residues. Positions 96-107 (SEPHRVLEDKKQ) are enriched in basic and acidic residues. The (+)RNA virus helicase ATP-binding domain maps to 185-326 (CNLSQRESEV…WLQVPVIFQS (142 aa)). Position 215–222 (215–222 (GVPGSGKT)) interacts with ATP. The (+)RNA virus helicase C-terminal domain occupies 327–463 (LTSRRFGKAT…QPQTDRYGPE (137 aa)).

It belongs to the virgaviridae/benyvirus TGB1 movement protein family. Homooligomer. TGB1-TGB3-TGB2 complex formation is enhanced by ATP hydrolysis. Interacts with the suppressor of RNA silencing (via N-terminus). Interacts (via N-terminus) with host importin IMPA1. The cofactor is Mg(2+).

The protein localises to the host cell junction. Its subcellular location is the host plasmodesma. It is found in the host nucleus. The protein resides in the host cytoplasm. It localises to the host nucleolus. The protein localises to the host cytoskeleton. The enzyme catalyses ATP + H2O = ADP + phosphate + H(+). Participates in the transport of viral genome to neighboring plant cells directly through plasmodesmata, without any budding. Multifunctional movement protein with RNA-binding, ATPase and helicase activities. Engages in homologous interactions leading to the formation of a ribonucleoprotein complex containing plus-sense viral RNAs (vRNPs). ATPase activity is probably required for vRNPs movement complex assembly. Intracellular delivery of TGBp1-containing vRNPs to plasmodesmata is facilitated by TGBp2 and TGBp3. This Potato mop-top virus (isolate Potato/Sweden/Sw) (PMTV) protein is Movement protein TGB1.